A 295-amino-acid chain; its full sequence is Protease HtpX (295 aa).

2 consecutive transmembrane segments (helical) span residues 4–24 (ILLFVATNLAVVLVASITLSL) and 41–61 (SSLLVFCAVFGFAGSLVSLFI). Residue histidine 147 coordinates Zn(2+). Glutamate 148 is an active-site residue. Histidine 151 is a Zn(2+) binding site. The next 2 membrane-spanning stretches (helical) occupy residues 158-178 (VTLALVQGVVNTFVMFFARII) and 199-219 (VATIVAELILGILASMIVMWF). Glutamate 224 contributes to the Zn(2+) binding site.

It belongs to the peptidase M48B family. It depends on Zn(2+) as a cofactor.

The protein localises to the cell inner membrane. The sequence is that of Protease HtpX from Pseudomonas putida (strain ATCC 700007 / DSM 6899 / JCM 31910 / BCRC 17059 / LMG 24140 / F1).